The primary structure comprises 735 residues: 1,4-alpha-glucan branching enzyme GlgB (735 aa).

The Nucleophile role is filled by Asp414. The active-site Proton donor is Glu469.

This sequence belongs to the glycosyl hydrolase 13 family. GlgB subfamily. In terms of assembly, monomer.

It carries out the reaction Transfers a segment of a (1-&gt;4)-alpha-D-glucan chain to a primary hydroxy group in a similar glucan chain.. Its pathway is glycan biosynthesis; glycogen biosynthesis. Functionally, catalyzes the formation of the alpha-1,6-glucosidic linkages in glycogen by scission of a 1,4-alpha-linked oligosaccharide from growing alpha-1,4-glucan chains and the subsequent attachment of the oligosaccharide to the alpha-1,6 position. The chain is 1,4-alpha-glucan branching enzyme GlgB from Burkholderia lata (strain ATCC 17760 / DSM 23089 / LMG 22485 / NCIMB 9086 / R18194 / 383).